Consider the following 417-residue polypeptide: Squalene synthase (417 aa).

2 residues coordinate NADP(+): R52 and R77. Residues D80, E83, and D84 each coordinate Mg(2+). Position 218 (R218) interacts with NADP(+). A helical transmembrane segment spans residues S284–Y304. Positions 315 and 317 each coordinate NADP(+). The helical transmembrane segment at P384–L404 threads the bilayer.

The protein belongs to the phytoene/squalene synthase family. It depends on Mg(2+) as a cofactor.

It is found in the endoplasmic reticulum membrane. The catalysed reaction is 2 (2E,6E)-farnesyl diphosphate + NADPH + H(+) = squalene + 2 diphosphate + NADP(+). It carries out the reaction 2 (2E,6E)-farnesyl diphosphate + NADH + H(+) = squalene + 2 diphosphate + NAD(+). The enzyme catalyses presqualene diphosphate + NADH + H(+) = squalene + diphosphate + NAD(+). It catalyses the reaction presqualene diphosphate + NADPH + H(+) = squalene + diphosphate + NADP(+). The catalysed reaction is 2 (2E,6E)-farnesyl diphosphate = presqualene diphosphate + diphosphate. Its pathway is terpene metabolism; lanosterol biosynthesis; lanosterol from farnesyl diphosphate: step 1/3. Catalyzes the condensation of 2 farnesyl pyrophosphate (FPP) moieties to form squalene. Proceeds in two distinct steps. In the first half-reaction, two molecules of FPP react to form the stable presqualene diphosphate intermediate (PSQPP), with concomitant release of a proton and a molecule of inorganic diphosphate. In the second half-reaction, PSQPP undergoes heterolysis, isomerization, and reduction with NADPH or NADH to form squalene. It is the first committed enzyme of the sterol biosynthesis pathway. The polypeptide is Squalene synthase (FDFT1) (Bos taurus (Bovine)).